Here is a 426-residue protein sequence, read N- to C-terminus: Glutamate-1-semialdehyde 2,1-aminomutase 2 (426 aa).

Lys-265 is subject to N6-(pyridoxal phosphate)lysine.

Belongs to the class-III pyridoxal-phosphate-dependent aminotransferase family. HemL subfamily. Homodimer. Pyridoxal 5'-phosphate serves as cofactor.

The protein localises to the cytoplasm. The catalysed reaction is (S)-4-amino-5-oxopentanoate = 5-aminolevulinate. It functions in the pathway porphyrin-containing compound metabolism; protoporphyrin-IX biosynthesis; 5-aminolevulinate from L-glutamyl-tRNA(Glu): step 2/2. This Lachnoclostridium phytofermentans (strain ATCC 700394 / DSM 18823 / ISDg) (Clostridium phytofermentans) protein is Glutamate-1-semialdehyde 2,1-aminomutase 2.